We begin with the raw amino-acid sequence, 1430 residues long: Bromodomain-containing protein homolog (1430 aa).

The C2H2-type zinc finger occupies 23 to 49 (FACPVRGCDRSYKTIMGLQYHLMKYDH). Residues 51 to 111 (NPQPLTPVLT…AGGGSASGVS (61 aa)) form a disordered region. A compositionally biased stretch (basic residues) spans 62-81 (SRKKARSRSGGHHSTPRPHK). The segment at 283–333 (DAVCCICLDGECQNTNVILFCDMCNLAVHQDCYGVPYIPEGQWLCRRCLQS) adopts a PHD-type 1 zinc-finger fold. The Zn(2+) site is built by C286, C289, C303, C306, H311, C314, C327, and C330. The C2HC pre-PHD-type zinc finger occupies 337 to 370 (PVNCVLCPNAGGAFKQTDHGQWAHVVCALWIPEV). The PHD-type 2 zinc-finger motif lies at 394–457 (LTCYVCKEKG…QKFAYCHAHT (64 aa)). One can recognise a Bromo domain in the interval 611-715 (LQLNPLEAAL…DQAAPLFVQV (105 aa)). Over residues 796-805 (KARFAARHSS) the composition is skewed to basic residues. 4 disordered regions span residues 796-887 (KARF…SSPV), 901-942 (AQAA…TTAA), 1012-1054 (ANLP…QALP), and 1076-1301 (QRDV…GQKP). A compositionally biased stretch (acidic residues) spans 842-857 (HDDDDEEEDSDEDSMG). Polar residues predominate over residues 865–887 (LLNSTQTPPCSPIKSLNNSSSPV). 3 stretches are compositionally biased toward low complexity: residues 922-942 (NSQSSNTQSTSGSSSSVTTAA), 1034-1043 (SSSMSPKKSP), and 1085-1107 (APSQSSSPCSSCSDFSMSGSCSD). A compositionally biased stretch (acidic residues) spans 1108–1120 (FDSDEASEGDADG). Basic and acidic residues predominate over residues 1121–1137 (DPDRDGGRSRSEERDST). Composition is skewed to polar residues over residues 1151 to 1165 (ASLNNVQGNNGNMAI) and 1265 to 1278 (NTTAAGSAPLTNNN). Residues 1281-1293 (KHSEDSASSERHN) show a composition bias toward basic and acidic residues. The region spanning 1305-1378 (PLQLVWAKCR…TWQWLPANKL (74 aa)) is the PWWP domain.

Component of the Enok complex composed of at least Br140, enok, Eaf6 and Ing5. As part of the Enok complex, interacts with elg1 and the Elg1 RFC-like complex.

Its subcellular location is the nucleus. In terms of biological role, scaffold subunit of the histone acetyltransferase (HAT) Enok complex which has histone H3 acetyltransferase activity. As part of the Enok complex, associates with the Elg1 RFC-like complex and down-regulates its PCNA-unloading function to promote the G1/S transition. May also play a role in maintaining the protein levels and stability of enok. In Drosophila melanogaster (Fruit fly), this protein is Bromodomain-containing protein homolog.